The sequence spans 659 residues: Protein SCARECROW 1 (659 aa).

Disordered regions lie at residues 1 to 33 and 188 to 285; these read MGSSSLLLFPSSSSSATHSSYSPSSSSHAITSL and SDPA…KQRD. Over residues 190–228 the composition is skewed to pro residues; that stretch reads PAPPPPPPPSHPALLPPDATAPPPPPTSVAALPPPPPPQ. Low complexity predominate over residues 258–271; it reads AAAAAAAAAAALAA. The stretch at 258-289 forms a coiled coil; that stretch reads AAAAAAAAAAALAAAKERKEEQRRKQRDEEGL. The segment covering 272 to 285 has biased composition (basic and acidic residues); that stretch reads AKERKEEQRRKQRD. The GRAS domain occupies 282–652; that stretch reads KQRDEEGLHL…LCLLTASAWR (371 aa). The leucine repeat I (LRI) stretch occupies residues 289 to 353; that stretch reads LHLLTLLLQC…VSSCLGLYAP (65 aa). Positions 296-300 match the LxCxE motif motif; that stretch reads LQCAE. The interval 372 to 437 is VHIID; the sequence is FQVFNGISPF…GGPPRVRLTG (66 aa). Residues 403 to 407 carry the VHIID motif; sequence VHIID. Residues 447-479 form a leucine repeat II (LRII) region; sequence ATGKRLSDFADTLGLPFEFCPVADKAGNLDPEK. Positions 488-575 are PFYRE; sequence VAVHWLRHSL…QQLLSREIRN (88 aa). Positions 578 to 652 are SAW; the sequence is AVGGPARTGD…LCLLTASAWR (75 aa).

It belongs to the GRAS family. In terms of assembly, interacts with SHR1, but not with SHR2.

The protein localises to the nucleus. Its function is as follows. Transcription factor required for quiescent center cells specification and maintenance of surrounding stem cells, and for the asymmetric cell division involved in radial pattern formation in roots. Essential for cell division but not differentiation of the ground tissue. Regulates the radial organization of the shoot axial organs. Restricts SHR movment and sequesters it into the nucleus of the endodermis. This is Protein SCARECROW 1 (SCR1) from Oryza sativa subsp. indica (Rice).